We begin with the raw amino-acid sequence, 435 residues long: Cyclic 2,3-diphosphoglycerate synthetase (435 aa).

It belongs to the cyclic 2,3-diphosphoglycerate synthetase family.

It is found in the cytoplasm. The enzyme catalyses (2R)-2,3-bisphosphoglycerate + ATP + H(+) = cyclic (2R)-2,3-bisphosphoglycerate + ADP + phosphate. Its function is as follows. Catalyzes the formation of cyclic 2,3-diphosphoglycerate (cDPG) by formation of an intramolecular phosphoanhydride bond at the expense of ATP. The polypeptide is Cyclic 2,3-diphosphoglycerate synthetase (Pyrococcus horikoshii (strain ATCC 700860 / DSM 12428 / JCM 9974 / NBRC 100139 / OT-3)).